The following is a 190-amino-acid chain: Cancer-related nucleoside-triphosphatase homolog (190 aa).

Residues 9 to 16 and 109 to 116 each bind ATP; these read GPPGVGKT and VCIIDEIG. Residue Lys-165 is modified to N6-acetyllysine.

It belongs to the THEP1 NTPase family. In terms of assembly, monomer.

The catalysed reaction is a ribonucleoside 5'-triphosphate + H2O = a ribonucleoside 5'-diphosphate + phosphate + H(+). It carries out the reaction 5-methyl-UTP + H2O = 5-methyl-UDP + phosphate + H(+). It catalyses the reaction CTP + H2O = CDP + phosphate + H(+). The enzyme catalyses ATP + H2O = ADP + phosphate + H(+). The catalysed reaction is GTP + H2O = GDP + phosphate + H(+). Functionally, has nucleotide phosphatase activity towards ATP, GTP, CTP, TTP and UTP. Hydrolyzes nucleoside diphosphates with lower efficiency. This Mus musculus (Mouse) protein is Cancer-related nucleoside-triphosphatase homolog.